Here is a 248-residue protein sequence, read N- to C-terminus: Small ribosomal subunit protein uS2 (248 aa).

This sequence belongs to the universal ribosomal protein uS2 family.

The protein is Small ribosomal subunit protein uS2 of Dechloromonas aromatica (strain RCB).